The chain runs to 162 residues: Putative colanic acid biosynthesis acetyltransferase WcaB (162 aa).

The protein belongs to the transferase hexapeptide repeat family.

It functions in the pathway slime biogenesis; slime polysaccharide biosynthesis. In Escherichia coli O157:H7, this protein is Putative colanic acid biosynthesis acetyltransferase WcaB (wcaB).